The chain runs to 66 residues: Large ribosomal subunit protein uL29 (66 aa).

This sequence belongs to the universal ribosomal protein uL29 family.

This chain is Large ribosomal subunit protein uL29, found in Borrelia hermsii (strain HS1 / DAH).